The primary structure comprises 207 residues: Guanylate kinase (207 aa).

Residues 4–184 (GTLYIVSAPS…ALADLHTIIR (181 aa)) form the Guanylate kinase-like domain. 11 to 18 (APSGAGKS) lines the ATP pocket.

It belongs to the guanylate kinase family.

The protein localises to the cytoplasm. The enzyme catalyses GMP + ATP = GDP + ADP. Functionally, essential for recycling GMP and indirectly, cGMP. This chain is Guanylate kinase, found in Photorhabdus laumondii subsp. laumondii (strain DSM 15139 / CIP 105565 / TT01) (Photorhabdus luminescens subsp. laumondii).